Here is a 1068-residue protein sequence, read N- to C-terminus: TSC22 domain family protein 1 (1068 aa).

The tract at residues 1–98 (MHQPPESTAA…SQAQLQAQPL (98 aa)) is required for interaction with TGFBR1 and promotion of TGF-beta signaling. Disordered regions lie at residues 23–110 (AHPA…KKSG), 125–288 (ISSN…SPAS), and 602–623 (YSQA…QQLQ). Residues 36-55 (GSASALNAAGTGVGSSATSS) show a composition bias toward low complexity. Positions 58–70 (FPPPSLLQPPPPA) are enriched in pro residues. Positions 84–100 (SLNLLSQAQLQAQPLAP) are enriched in low complexity. Acidic residues predominate over residues 133-142 (EDTESYDDLD). Residues 216–240 (HPHHLHHHHHIHHGHHLQHGHHHPS) show a composition bias toward basic residues. Positions 241-250 (HVAVASASIP) are enriched in low complexity. The segment covering 261 to 271 (KLSTTGSSDSI) has biased composition (polar residues). A Phosphoserine modification is found at serine 263. Residues 272–288 (TPVAPTSAVSSSGSPAS) show a composition bias toward low complexity. Residues 609 to 620 (VQTPLPGAPPPQ) show a composition bias toward pro residues. The interval 1000–1021 (VLKEQIKELIEKNSQLEQENNL) is leucine-zipper. The disordered stretch occupies residues 1032–1068 (AQFQAQLQTGSPPATTQPQGTTQPPAQPASQGSGPTA). Over residues 1039 to 1068 (QTGSPPATTQPQGTTQPPAQPASQGSGPTA) the composition is skewed to low complexity.

It belongs to the TSC-22/Dip/Bun family. In terms of assembly, forms homodimers. Forms heterodimers. Component of a complex composed of TSC22D1 (via N-terminus), TGFBR1 and TGFBR2; the interaction between TSC22D1 and TGFBR1 is inhibited by SMAD7 and promoted by TGFB1. Interacts with SMAD7; the interaction requires TGF-beta and the interaction is inhibited by TGFBR1. Interacts with TPT1/fortilin; interaction results in the destabilization of TSC22D1 protein and prevents TSC22D1-mediated apoptosis. Interacts with SMAD4 (via N-terminus). Interacts with ACVRL1/ALK1, ACVR1/ALK2, BMPR1A/ALK3, ACVR1B/ALK4, BMPR1B/ALK6, ACVR2A/ACTRII, and BMPR2. Interacts with SMAD6. Interacts with TFE3; the interaction is enhanced in the presence of TGF-beta. As to quaternary structure, forms a heterodimer with TSC22D4/THG1. Forms a heterodimer with TSC22D4/THG1. Interacts with histone H1-2. Interacts with GNL3.

The protein resides in the cytoplasm. It is found in the nucleus. Its subcellular location is the cell membrane. It localises to the mitochondrion. Its function is as follows. Transcriptional repressor. Acts on the C-type natriuretic peptide (CNP) promoter. Acts to promote CASP3-mediated apoptosis. Positively regulates TGF-beta signaling by interacting with SMAD7 which inhibits binding of SMAD7 to TGFBR1, preventing recruitment of SMURF ubiquitin ligases to TGFBR1 and inhibiting SMURF-mediated ubiquitination and degradation of TGFBR1. Contributes to enhancement of TGF-beta signaling by binding to and modulating the transcription activator activity of SMAD4. Promotes TGF-beta-induced transcription of COL1A2; via its interaction with TFE3 at E-boxes in the gene proximal promoter. Plays a role in the repression of hematopoietic precursor cell growth. Promotes IL2 deprivation-induced apoptosis in T-lymphocytes, via repression of TSC22D3/GILZ transcription and activation of the caspase cascade. Functionally, may act to negatively regulate TGFB3 signaling and thereby inhibit cell death in mammary gland cells. Positively regulates cell death in response to TGFB3 during mammary gland involution. This Macaca fascicularis (Crab-eating macaque) protein is TSC22 domain family protein 1.